An 866-amino-acid polypeptide reads, in one-letter code: Retinoblastoma-related protein 2 (866 aa).

Residues 274–475 (TPITSAMTTA…EKGSSLYNSL (202 aa)) are domain A. The tract at residues 274 to 721 (TPITSAMTTA…NEVFVPAAKP (448 aa)) is pocket. Residues 476 to 593 (IVARPSVASE…PVGGNEKCAD (118 aa)) are spacer. A disordered region spans residues 513–551 (LPATPSKKRAAGRDDNADPRSPKRPCNESRSPVVEHNLQ). The span at 523–539 (AGRDDNADPRSPKRPCN) shows a compositional bias: basic and acidic residues. The domain B stretch occupies residues 594-721 (VTIQIFFSKI…NEVFVPAAKP (128 aa)). 2 disordered regions span residues 731–754 (TRPE…PFPN) and 839–866 (SLGQ…KPDT). Over residues 841–850 (GQPNGGSTSL) the composition is skewed to polar residues.

It belongs to the retinoblastoma protein (RB) family. In terms of tissue distribution, ubiquitous.

The protein localises to the nucleus. Regulator of biological processes that recruits a histone deacetylase to control gene transcription. May play a role in the entry into mitosis, negatively regulating the cell proliferation. Formation of stable complexes with geminiviridae replication-associated proteins may create a cellular environment which favors viral DNA replication. This Zea mays (Maize) protein is Retinoblastoma-related protein 2 (RBR2).